Consider the following 545-residue polypeptide: uncharacterized protein (545 aa).

A compositionally biased stretch (basic residues) spans 1–10 (MSRYRFRKAR). The segment at 1 to 25 (MSRYRFRKARSNWPMGQNDSRWEPP) is disordered. WD repeat units follow at residues 417-456 (ACNT…NPMM) and 460-501 (GHSN…MLCS).

This is an uncharacterized protein from Caenorhabditis elegans.